The primary structure comprises 835 residues: Ion-translocating oxidoreductase complex subunit C (835 aa).

4Fe-4S ferredoxin-type domains lie at 368–397 (YAPPAPEQSCIRCSACSDACPVSLMPQQLY) and 407–436 (KSEEYALKDCIECGLCAYVCPSHIPLIQYF). [4Fe-4S] cluster is bound by residues Cys-377, Cys-380, Cys-383, Cys-387, Cys-416, Cys-419, Cys-422, and Cys-426. Residues 468–489 (AREEQERKARAQKAMEARRQEM) are compositionally biased toward basic and acidic residues. Disordered regions lie at residues 468–492 (AREEQERKARAQKAMEARRQEMKTA), 540–574 (QRKARRLARQQQTQNTDVSQVETNEENKSTDSKSA), 586–618 (KAAQQGSALEKDEISSSDTLSVGNDTEPVAEDP), 634–666 (KAAQQGSAVEKDEISSSNTLSVGNDTEPVADDP), 682–714 (KAAQQGSAVEQDEISSSDTLSIGNEAEPVADDP), 730–762 (KAAQQRSAVEQDEISSSDTLSVGNETESVAEDP), and 778–811 (KAAQQRSAVEQDEISSSDTLSVGNETESVAEDPR). Positions 552–561 (TQNTDVSQVE) are enriched in polar residues. Polar residues predominate over residues 648-657 (SSSNTLSVGN). 2 stretches are compositionally biased toward polar residues: residues 745–756 (SSDTLSVGNETE) and 793–804 (SSDTLSVGNETE).

Belongs to the 4Fe4S bacterial-type ferredoxin family. RnfC subfamily. In terms of assembly, the complex is composed of six subunits: RnfA, RnfB, RnfC, RnfD, RnfE and RnfG. The cofactor is [4Fe-4S] cluster.

Its subcellular location is the cell inner membrane. Part of a membrane-bound complex that couples electron transfer with translocation of ions across the membrane. The protein is Ion-translocating oxidoreductase complex subunit C of Pasteurella multocida (strain Pm70).